Consider the following 1123-residue polypeptide: Polyprotein of EF-Ts, chloroplastic (1123 aa).

The N-terminal 73 residues, 1–73 (MTPVVHCSVG…SSARRPRTLS (73 aa)), are a transit peptide targeting the chloroplast. The interval 68–141 (RPRTLSAATV…MPPLNDEDLV (74 aa)) is disordered. The segment covering 94–103 (TSEESSEDTA) has biased composition (acidic residues). Residues 106–119 (TAEASEQAEASTSS) show a composition bias toward low complexity. The S1 motif 1 domain maps to 143-212 (GASFTGKVRS…ETGRISLTMR (70 aa)). Positions 213–258 (TGGDYVKPKTETPKAASGGRNTTATTSRGSPRQTRERDEAKSMGET) are disordered. Over residues 231–244 (GRNTTATTSRGSPR) the composition is skewed to polar residues. Positions 245–254 (QTRERDEAKS) are enriched in basic and acidic residues. The S1 motif 2 domain occupies 263 to 331 (GQFLDGVVKN…VRGQVTLTMK (69 aa)). 2 disordered regions span residues 443–670 (KTES…SEKT) and 894–923 (VAAQ…EEKK). The span at 486–501 (EGSVTTEPTEAASTEF) shows a compositional bias: polar residues. Residues 551-587 (SVASTESVTAVVEESAPVSSVAIEVPAPEASEASAQE) show a composition bias toward low complexity. Over residues 630–639 (KPDEPEESLI) the composition is skewed to acidic residues. Low complexity-rich tracts occupy residues 657–670 (AAVP…SEKT) and 894–903 (VAAQTAAKAP). The segment covering 908–923 (PKDDKPEETAETEEKK) has biased composition (basic and acidic residues).

It belongs to the EF-Ts family. Component of the chloroplast ribosome 30S and 70S subunits, as well as polysomes. As to quaternary structure, component of the chloroplast ribosome 70S subunit, and at low levels, present in polysomes. In terms of assembly, associates transiently with chloroplast polysomes.

It is found in the plastid. Its subcellular location is the chloroplast. In terms of biological role, associates with the EF-Tu.GDP complex and induces the exchange of GDP to GTP. It remains bound to the aminoacyl-tRNA.EF-Tu.GTP complex up to the GTP hydrolysis stage on the ribosome. Its function is as follows. Binds to psbD and psbA 5'-untranslated regions (UTRs) in vitro. In Oryza sativa subsp. indica (Rice), this protein is Polyprotein of EF-Ts, chloroplastic.